The primary structure comprises 578 residues: Probable arginine--tRNA ligase, mitochondrial (578 aa).

Residues 1 to 16 (MACGFRRAIACQLSRV) constitute a mitochondrion transit peptide. Residues 133-135 (SPN), H144, Y322, D326, and Q350 contribute to the L-arginine site. Residues 133–144 (SPNVAKKFHVGH) carry the 'HIGH' region motif. At K568 the chain carries N6-acetyllysine.

This sequence belongs to the class-I aminoacyl-tRNA synthetase family.

Its subcellular location is the mitochondrion membrane. The catalysed reaction is tRNA(Arg) + L-arginine + ATP = L-arginyl-tRNA(Arg) + AMP + diphosphate. Functionally, catalyzes the attachment of arginine to tRNA(Arg) in a two-step reaction: arginine is first activated by ATP to form Arg-AMP and then transferred to the acceptor end of tRNA(Arg). The protein is Probable arginine--tRNA ligase, mitochondrial (RARS2) of Homo sapiens (Human).